A 105-amino-acid chain; its full sequence is UPF0251 protein AF_0666 (105 aa).

This sequence belongs to the UPF0251 family.

The sequence is that of UPF0251 protein AF_0666 from Archaeoglobus fulgidus (strain ATCC 49558 / DSM 4304 / JCM 9628 / NBRC 100126 / VC-16).